Reading from the N-terminus, the 175-residue chain is Endothelin-2 (175 aa).

The N-terminal stretch at 1 to 21 (MVSAWCSIALALLLALHEGKG) is a signal peptide. The propeptide occupies 22–43 (QAAATLEQPASAPKGRGPHLRF). Cystine bridges form between cysteine 46-cysteine 60 and cysteine 48-cysteine 56. The propeptide occupies 67-175 (VNTAGQTAPY…IPAYSRWRKR (109 aa)). The endothelin-like stretch occupies residues 93-108 (CECSTAGDSACATFCH).

This sequence belongs to the endothelin/sarafotoxin family.

It localises to the secreted. Its function is as follows. Vasoconstrictor. This is Endothelin-2 (Edn2) from Mus musculus (Mouse).